Reading from the N-terminus, the 309-residue chain is Mas-related G-protein coupled receptor member E (309 aa).

Over 1-21 (MSLRVHTHSPSTQGDMAFNLT) the chain is Extracellular. Asn-19 carries an N-linked (GlcNAc...) asparagine glycan. Residues 22–42 (ILSLTELLSLGGLLGNGVALW) form a helical membrane-spanning segment. Over 43–59 (LLNQNVYRNPFSIYLLD) the chain is Cytoplasmic. Residues 60 to 80 (VACADLIFLCCHMVAIIPELL) traverse the membrane as a helical segment. Residues 81 to 91 (QDQLNFPEFVH) lie on the Extracellular side of the membrane. The helical transmembrane segment at 92 to 112 (ISLIMLRFFCYIVGLSLLVAI) threads the bilayer. Over 113–132 (STEQCLATLFPSGYLCRRPR) the chain is Cytoplasmic. A helical membrane pass occupies residues 133-153 (YLTTCVCAFIWVLCLLLDLLL). At 154–168 (SGACTQFFGAPSYHL) the chain is on the extracellular side. The chain crosses the membrane as a helical span at residues 169–189 (CGMLWLVVAVLLAALCCTMCV). The Cytoplasmic segment spans residues 190–212 (TSLLLLLRVERGPERHQPRGFPT). Residues 213–233 (LVLLVILLFLFCGLPFGIFWL) traverse the membrane as a helical segment. Over 234–247 (SKNLSWHTPLYFYH) the chain is Extracellular. N-linked (GlcNAc...) asparagine glycosylation is present at Asn-236. Residues 248-268 (FSFFMASVHSAAKPAIYFFLG) form a helical membrane-spanning segment. Topologically, residues 269-309 (STPGQRFQEPLRLVLQRALGDEAELGAVREASQGGLVDMTV) are cytoplasmic.

It belongs to the G-protein coupled receptor 1 family. Mas subfamily.

It is found in the cell membrane. Orphan receptor. May regulate nociceptor function and/or development, including the sensation or modulation of pain. This chain is Mas-related G-protein coupled receptor member E (Mrgpre), found in Rattus norvegicus (Rat).